We begin with the raw amino-acid sequence, 519 residues long: Probable cytochrome P450 6g2 (519 aa).

C460 contributes to the heme binding site.

The protein belongs to the cytochrome P450 family. Heme serves as cofactor.

Its subcellular location is the endoplasmic reticulum membrane. The protein resides in the microsome membrane. In terms of biological role, may be involved in the metabolism of insect hormones and in the breakdown of synthetic insecticides. This Drosophila melanogaster (Fruit fly) protein is Probable cytochrome P450 6g2 (Cyp6g2).